Reading from the N-terminus, the 307-residue chain is uncharacterized protein (307 aa).

The chain crosses the membrane as a helical span at residues 12-34; that stretch reads LLAFLLALIMIGSVFAYMLSGGS.

Its subcellular location is the membrane. This is an uncharacterized protein from Archaeoglobus fulgidus (strain ATCC 49558 / DSM 4304 / JCM 9628 / NBRC 100126 / VC-16).